Here is a 363-residue protein sequence, read N- to C-terminus: Chorismate synthase (363 aa).

The NADP(+) site is built by Arg48 and Arg54. Residues 125 to 127 (RSS), 237 to 238 (NA), Gly277, 292 to 296 (KPTSS), and Arg318 each bind FMN.

The protein belongs to the chorismate synthase family. As to quaternary structure, homotetramer. FMNH2 is required as a cofactor.

The catalysed reaction is 5-O-(1-carboxyvinyl)-3-phosphoshikimate = chorismate + phosphate. The protein operates within metabolic intermediate biosynthesis; chorismate biosynthesis; chorismate from D-erythrose 4-phosphate and phosphoenolpyruvate: step 7/7. Catalyzes the anti-1,4-elimination of the C-3 phosphate and the C-6 proR hydrogen from 5-enolpyruvylshikimate-3-phosphate (EPSP) to yield chorismate, which is the branch point compound that serves as the starting substrate for the three terminal pathways of aromatic amino acid biosynthesis. This reaction introduces a second double bond into the aromatic ring system. This is Chorismate synthase from Pseudomonas savastanoi pv. phaseolicola (strain 1448A / Race 6) (Pseudomonas syringae pv. phaseolicola (strain 1448A / Race 6)).